The chain runs to 349 residues: Signal peptidase I (349 aa).

2 helical membrane-spanning segments follow: residues 3–23 (NLFFVILLAVGFGVWKVLDYF) and 25–45 (LPNTFSILLLILTALSGVLWC). The Cytoplasmic portion of the chain corresponds to 46 to 80 (YHRFVVLPKRHRQVARAEQRSGKTLSEEEKAKIEP). A helical transmembrane segment spans residues 81 to 101 (ISEASEFLSSLFPVLAVVFLV). The Periplasmic segment spans residues 102 to 349 (RSFLFEPFQI…RFERFFTAIK (248 aa)). Catalysis depends on residues Ser115 and Lys196.

Belongs to the peptidase S26 family.

Its subcellular location is the cell inner membrane. The enzyme catalyses Cleavage of hydrophobic, N-terminal signal or leader sequences from secreted and periplasmic proteins.. The sequence is that of Signal peptidase I (lepB) from Haemophilus influenzae (strain ATCC 51907 / DSM 11121 / KW20 / Rd).